Reading from the N-terminus, the 449-residue chain is Kynurenine 3-monooxygenase (449 aa).

Belongs to the aromatic-ring hydroxylase family. KMO subfamily. Requires FAD as cofactor.

The catalysed reaction is L-kynurenine + NADPH + O2 + H(+) = 3-hydroxy-L-kynurenine + NADP(+) + H2O. It functions in the pathway cofactor biosynthesis; NAD(+) biosynthesis; quinolinate from L-kynurenine: step 1/3. Catalyzes the hydroxylation of L-kynurenine (L-Kyn) to form 3-hydroxy-L-kynurenine (L-3OHKyn). Required for synthesis of quinolinic acid. The polypeptide is Kynurenine 3-monooxygenase (Legionella pneumophila (strain Lens)).